The primary structure comprises 127 residues: Large-conductance mechanosensitive channel (127 aa).

Helical transmembrane passes span 19–39, 42–62, and 67–87; these read VGVI…TNII, LLGI…VGSA, and GAFI…FLLI.

This sequence belongs to the MscL family. Homopentamer.

It localises to the cell membrane. Channel that opens in response to stretch forces in the membrane lipid bilayer. May participate in the regulation of osmotic pressure changes within the cell. This is Large-conductance mechanosensitive channel from Levilactobacillus brevis (strain ATCC 367 / BCRC 12310 / CIP 105137 / JCM 1170 / LMG 11437 / NCIMB 947 / NCTC 947) (Lactobacillus brevis).